The chain runs to 151 residues: Deoxyuridine 5'-triphosphate nucleotidohydrolase (151 aa).

Residues 70–72 (RSG), Asn83, 87–89 (LID), and Lys97 contribute to the substrate site.

It belongs to the dUTPase family. Mg(2+) is required as a cofactor.

The enzyme catalyses dUTP + H2O = dUMP + diphosphate + H(+). It participates in pyrimidine metabolism; dUMP biosynthesis; dUMP from dCTP (dUTP route): step 2/2. This enzyme is involved in nucleotide metabolism: it produces dUMP, the immediate precursor of thymidine nucleotides and it decreases the intracellular concentration of dUTP so that uracil cannot be incorporated into DNA. This Idiomarina loihiensis (strain ATCC BAA-735 / DSM 15497 / L2-TR) protein is Deoxyuridine 5'-triphosphate nucleotidohydrolase.